We begin with the raw amino-acid sequence, 892 residues long: Isoleucine--tRNA ligase (892 aa).

Positions 60–70 match the 'HIGH' region motif; the sequence is PYANGSIHIGH. Glu552 lines the L-isoleucyl-5'-AMP pocket. Positions 593 to 597 match the 'KMSKS' region motif; it reads KMSKS. Lys596 is a binding site for ATP. Zn(2+) is bound by residues Cys862, Cys865, Cys879, and Cys882.

Belongs to the class-I aminoacyl-tRNA synthetase family. IleS type 1 subfamily. In terms of assembly, monomer. It depends on Zn(2+) as a cofactor.

The protein localises to the cytoplasm. The catalysed reaction is tRNA(Ile) + L-isoleucine + ATP = L-isoleucyl-tRNA(Ile) + AMP + diphosphate. Catalyzes the attachment of isoleucine to tRNA(Ile). As IleRS can inadvertently accommodate and process structurally similar amino acids such as valine, to avoid such errors it has two additional distinct tRNA(Ile)-dependent editing activities. One activity is designated as 'pretransfer' editing and involves the hydrolysis of activated Val-AMP. The other activity is designated 'posttransfer' editing and involves deacylation of mischarged Val-tRNA(Ile). The protein is Isoleucine--tRNA ligase of Mycoplasmopsis agalactiae (strain NCTC 10123 / CIP 59.7 / PG2) (Mycoplasma agalactiae).